The following is a 263-amino-acid chain: Ribonuclease HII (263 aa).

The region spanning 71-262 is the RNase H type-2 domain; that stretch reads QAIAGIDEVG…VKSMCCDSTN (192 aa). 3 residues coordinate a divalent metal cation: Asp-77, Glu-78, and Asp-172.

It belongs to the RNase HII family. It depends on Mn(2+) as a cofactor. Mg(2+) serves as cofactor.

Its subcellular location is the cytoplasm. The catalysed reaction is Endonucleolytic cleavage to 5'-phosphomonoester.. Functionally, endonuclease that specifically degrades the RNA of RNA-DNA hybrids. The sequence is that of Ribonuclease HII from Streptococcus pyogenes serotype M4 (strain MGAS10750).